The following is a 494-amino-acid chain: Guanosine-5'-triphosphate,3'-diphosphate pyrophosphatase (494 aa).

This sequence belongs to the GppA/Ppx family. GppA subfamily.

It catalyses the reaction guanosine 3'-diphosphate 5'-triphosphate + H2O = guanosine 3',5'-bis(diphosphate) + phosphate + H(+). It functions in the pathway purine metabolism; ppGpp biosynthesis; ppGpp from GTP: step 2/2. Its function is as follows. Catalyzes the conversion of pppGpp to ppGpp. Guanosine pentaphosphate (pppGpp) is a cytoplasmic signaling molecule which together with ppGpp controls the 'stringent response', an adaptive process that allows bacteria to respond to amino acid starvation, resulting in the coordinated regulation of numerous cellular activities. This chain is Guanosine-5'-triphosphate,3'-diphosphate pyrophosphatase, found in Escherichia coli O157:H7.